The primary structure comprises 305 residues: tRNA pseudouridine synthase B (305 aa).

The Nucleophile role is filled by aspartate 48.

It belongs to the pseudouridine synthase TruB family. Type 1 subfamily.

The enzyme catalyses uridine(55) in tRNA = pseudouridine(55) in tRNA. Functionally, responsible for synthesis of pseudouridine from uracil-55 in the psi GC loop of transfer RNAs. The sequence is that of tRNA pseudouridine synthase B from Actinobacillus pleuropneumoniae serotype 5b (strain L20).